Consider the following 294-residue polypeptide: Acetylglutamate kinase (294 aa).

Substrate contacts are provided by residues 47 to 48, R69, and N168; that span reads GG.

The protein belongs to the acetylglutamate kinase family. ArgB subfamily.

The protein localises to the cytoplasm. The catalysed reaction is N-acetyl-L-glutamate + ATP = N-acetyl-L-glutamyl 5-phosphate + ADP. It functions in the pathway amino-acid biosynthesis; L-arginine biosynthesis; N(2)-acetyl-L-ornithine from L-glutamate: step 2/4. Functionally, catalyzes the ATP-dependent phosphorylation of N-acetyl-L-glutamate. The polypeptide is Acetylglutamate kinase (Corynebacterium glutamicum (strain ATCC 13032 / DSM 20300 / JCM 1318 / BCRC 11384 / CCUG 27702 / LMG 3730 / NBRC 12168 / NCIMB 10025 / NRRL B-2784 / 534)).